A 215-amino-acid chain; its full sequence is Calmodulin-like protein 5 (215 aa).

Residues 38-61 (KNSPPSPSTMLPSPSSSSAPTKRI) are disordered. A compositionally biased stretch (low complexity) spans 45 to 57 (STMLPSPSSSSAP). EF-hand domains are found at residues 61–96 (IDPSELKRVFQMFDKNGDGRITKEELNDSLENLGIY), 97–132 (IPDKDLTQMIHKIDANGDGCVDIDEFESLYSSIVDE), 139–174 (TEEEDMKDAFNVFDQDGDGFITVEELKSVMASLGLK), and 177–212 (KTLDGCKKMIMQVDADGDGRVNYKEFLQMMKGGGFS). Aspartate 74, asparagine 76, aspartate 78, arginine 80, glutamate 85, aspartate 110, asparagine 112, aspartate 114, cysteine 116, glutamate 121, aspartate 152, aspartate 154, aspartate 156, glutamate 163, aspartate 190, aspartate 192, aspartate 194, arginine 196, and glutamate 201 together coordinate Ca(2+).

It belongs to the calmodulin family.

Potential calcium sensor. The sequence is that of Calmodulin-like protein 5 (CML5) from Arabidopsis thaliana (Mouse-ear cress).